The chain runs to 543 residues: Ipecoside beta-D-glucosidase IpeGLU1 (543 aa).

A beta-D-glucoside is bound by residues glutamine 36, histidine 140, 185–186 (NE), tyrosine 350, glutamate 422, tryptophan 471, and phenylalanine 487. Glutamate 186 (proton donor) is an active-site residue. Residue glutamate 422 is the Nucleophile of the active site.

Belongs to the glycosyl hydrolase 1 family. As to expression, expressed in roots.

The protein localises to the cytoplasm. The protein resides in the cytosol. It carries out the reaction deacetylipecoside + H2O = deacetylipecoside aglycone + D-glucose. It catalyses the reaction deacetylisoipecoside + H2O = deacetylisoipecoside aglycone + D-glucose. The catalysed reaction is 6-O-methyldeacetylipecoside + H2O = 6-O-methyldeacetylipecoside aglycone + D-glucose. The enzyme catalyses 6-O-methyldeacetylisoipecoside + H2O = 6-O-methyldeacetylisoipecoside aglycone + D-glucose. It carries out the reaction ipecoside + H2O = ipecoside aglycone + D-glucose. It catalyses the reaction 3alpha(S)-strictosidine + H2O = strictosidine aglycone + D-glucose. The protein operates within alkaloid biosynthesis. With respect to regulation, inhibited by Cu(2+), Fe(2+) and Zn(2+). In terms of biological role, beta-glucosidase involved in the biosynthesis of ipecac and benzylisoquinoline monoterpenoid-isoquinoline alkaloids natural products, starting by the condensation of dopamine and secologanin, and including emetine and cephaeline, drugs used both as anti-protozoal (e.g. treatment of ameobiasis) and as emetic agents. In response to pathogen and herbivore attack, triggers the release of toxic ipecoside aglycon to trigger defense responses. Catalyzes deglucosylation both on (1S)-diastereomer and (1R)-diastereomer substrates, including ipecoside, the main alkaloidal glucoside. Also active on N-deacetylisoipecoside, 6-O-methyl-N-deacetylisoipecoside, 6-O-methyl-N-deacetylipecoside and N-deacetylipecoside. The polypeptide is Ipecoside beta-D-glucosidase IpeGLU1 (Carapichea ipecacuanha (Ipecac)).